The sequence spans 600 residues: Chaperone protein DnaK (600 aa).

The residue at position 175 (Thr-175) is a Phosphothreonine; by autocatalysis. The span at 569-578 (SFAQATAQQA) shows a compositional bias: low complexity. The disordered stretch occupies residues 569–600 (SFAQATAQQANTSESDPKADDSNTIDAEIKQD). Over residues 583 to 600 (SDPKADDSNTIDAEIKQD) the composition is skewed to basic and acidic residues.

Belongs to the heat shock protein 70 family.

Acts as a chaperone. This Mesomycoplasma hyopneumoniae (strain 7448) (Mycoplasma hyopneumoniae) protein is Chaperone protein DnaK.